We begin with the raw amino-acid sequence, 513 residues long: Ribonuclease Y (513 aa).

A helical transmembrane segment spans residues 4 to 24 (TTSLIIAILAGILGIVIGFFF). Residues 78–106 (KSRLKEISRQEDRLNSKEENLERKNASLE) form a disordered region. The KH domain occupies 203–288 (TVSVVNLPND…EMVEKARKDV (86 aa)). An HD domain is found at 329–422 (VLKHSIEVSN…VQSADAISAA (94 aa)).

This sequence belongs to the RNase Y family.

Its subcellular location is the cell membrane. In terms of biological role, endoribonuclease that initiates mRNA decay. This chain is Ribonuclease Y, found in Finegoldia magna (strain ATCC 29328 / DSM 20472 / WAL 2508) (Peptostreptococcus magnus).